We begin with the raw amino-acid sequence, 231 residues long: Uracil-DNA glycosylase (231 aa).

The active-site Proton acceptor is aspartate 74.

It belongs to the uracil-DNA glycosylase (UDG) superfamily. UNG family.

It localises to the cytoplasm. The enzyme catalyses Hydrolyzes single-stranded DNA or mismatched double-stranded DNA and polynucleotides, releasing free uracil.. In terms of biological role, excises uracil residues from the DNA which can arise as a result of misincorporation of dUMP residues by DNA polymerase or due to deamination of cytosine. This Campylobacter jejuni subsp. jejuni serotype O:6 (strain 81116 / NCTC 11828) protein is Uracil-DNA glycosylase.